The sequence spans 456 residues: Ammonium transporter Amt2 (456 aa).

The next 11 membrane-spanning stretches (helical) occupy residues 18–38 (LVWVLTVTFLIFFMHAGFAML), 61–81 (IGVIVFFLLGAAVSAIVAGLT), 109–129 (WLFGAVFAMTAATIVSGAVAG), 141–161 (ILIAGVIYPVVVGVTWAGGFL), 170–190 (AGGMIVHGMGGIAGLTAAWII), 211–231 (ITFAVLGTLILAFGWYGFNVG), 255–275 (VALVTTLGMAAGALGAGGVAF), 281–301 (VDTLYVANGVLAGLVGITAIA), 304–324 (IVWPGALVVGLLAGAQLPIVF), 339–359 (VFPVHGSAGVLGTLLYPVFAV), and 377–397 (VGVGVIAVWTFVATTAIFGGF).

It belongs to the ammonia transporter channel (TC 1.A.11.2) family. Homotrimer. Interacts with both GlnK1 and GlnK2 after ammonium shock.

Its subcellular location is the cell membrane. Functionally, involved in the uptake of ammonium/ammonia (NH(4)(+)/NH(3)). Transport is electrogenic. This Haloferax mediterranei (strain ATCC 33500 / DSM 1411 / JCM 8866 / NBRC 14739 / NCIMB 2177 / R-4) (Halobacterium mediterranei) protein is Ammonium transporter Amt2.